Here is a 230-residue protein sequence, read N- to C-terminus: Ribonuclease 3 (230 aa).

Positions 1–134 constitute an RNase III domain; it reads MKQLEELLST…FLGALLLDKG (134 aa). Glu-47 contacts Mg(2+). The active site involves Asp-51. Mg(2+)-binding residues include Asp-120 and Glu-123. The active site involves Glu-123. Residues 160-229 enclose the DRBM domain; it reads DYKTCLQEFL…AKNALAQLSE (70 aa).

Belongs to the ribonuclease III family. As to quaternary structure, homodimer. Requires Mg(2+) as cofactor.

Its subcellular location is the cytoplasm. It carries out the reaction Endonucleolytic cleavage to 5'-phosphomonoester.. Functionally, digests double-stranded RNA. Involved in the processing of primary rRNA transcript to yield the immediate precursors to the large and small rRNAs (23S and 16S). Processes some mRNAs, and tRNAs when they are encoded in the rRNA operon. Processes pre-crRNA and tracrRNA of type II CRISPR loci if present in the organism. This chain is Ribonuclease 3, found in Streptococcus pyogenes serotype M49 (strain NZ131).